The sequence spans 295 residues: CRISPR system Cmr endoribonuclease Cmr4 (295 aa).

This sequence belongs to the CRISPR system Cmr4 family. As to quaternary structure, forms oligomers in isolation. Part of the type III-B Cmr ribonucleoprotein (RNP) complex, an elongated RNP with Cmr2 and Cmr3 as the base, with Cmr4 and Cmr5 forming a helical core along the mature crRNA (39 or 45 nt in length), while the complex is capped by Cmr6 and Cmr1. The 5' end of the crRNA is bound to Cmr2 and Cmr3, while Cmr6 and a Cmr1 subunit (Cmr1-1 or Cmr1-2) cap the 3' end of the crRNA. The target RNA lies anti-parallel to the crRNA, with its 5' end near Cmr1 and Cmr6 and its 3' end near Cmr2 and Cmr3; major target RNA cleavage occurs nears the junction of Cmr1/Cmr6 and Cmr4/Cmr5, with minor cleavage occurring at 6 nt intervals which coincide with the proposed spacing of Cmr4 subunits. Interacts with Cmr5. Interacts with Cmr2, Cmr3, Cmr5 and Cmr6.

It localises to the cytoplasm. CRISPR (clustered regularly interspaced short palindromic repeat), is an adaptive immune system that provides protection against mobile genetic elements (viruses, transposable elements and conjugative plasmids). CRISPR clusters contain sequences complementary to antecedent mobile elements and target invading nucleic acids. CRISPR clusters are transcribed and processed into CRISPR RNA (crRNA), formerly called psiRNA (prokaryotic silencing) in this organism. Part of the Cmr ribonucleoprotein complex which has divalent cation-dependent endoribonuclease activity specific for ssRNA complementary to the crRNA (target RNA), generating 5' hydroxy- and 3' phosphate or 2'-3' cyclic phosphate termini. This is probably the subunit that cleaves the target RNA. Cmr complex does not cleave ssDNA complementary to the crRNA. Cleavage of target RNA is guided by the crRNA; substrate cleavage occurs a fixed distance (14 nt) from the 3' end of the crRNA. In vitro reconstitution shows Cmr1-2 and Cmr5 are not absolutely necessary for target cleavage. The protein is CRISPR system Cmr endoribonuclease Cmr4 of Pyrococcus furiosus (strain ATCC 43587 / DSM 3638 / JCM 8422 / Vc1).